We begin with the raw amino-acid sequence, 362 residues long: UDP-3-O-acylglucosamine N-acyltransferase (362 aa).

The active-site Proton acceptor is the H251.

Belongs to the transferase hexapeptide repeat family. LpxD subfamily. As to quaternary structure, homotrimer.

The catalysed reaction is a UDP-3-O-[(3R)-3-hydroxyacyl]-alpha-D-glucosamine + a (3R)-hydroxyacyl-[ACP] = a UDP-2-N,3-O-bis[(3R)-3-hydroxyacyl]-alpha-D-glucosamine + holo-[ACP] + H(+). Its pathway is bacterial outer membrane biogenesis; LPS lipid A biosynthesis. Functionally, catalyzes the N-acylation of UDP-3-O-acylglucosamine using 3-hydroxyacyl-ACP as the acyl donor. Is involved in the biosynthesis of lipid A, a phosphorylated glycolipid that anchors the lipopolysaccharide to the outer membrane of the cell. In Cupriavidus pinatubonensis (strain JMP 134 / LMG 1197) (Cupriavidus necator (strain JMP 134)), this protein is UDP-3-O-acylglucosamine N-acyltransferase.